We begin with the raw amino-acid sequence, 30 residues long: Cyclotide mden-G (30 aa).

Positions 1-30 (GIPCAESCVYIPCITAALGCSCKNKVCYRN) form a cross-link, cyclopeptide (Gly-Asn). Cystine bridges form between Cys4-Cys20, Cys8-Cys22, and Cys13-Cys27.

This sequence belongs to the cyclotide family. Bracelet subfamily. Post-translationally, this is a cyclic peptide.

In terms of biological role, probably participates in a plant defense mechanism. The chain is Cyclotide mden-G from Melicytus dentatus (Tree violet).